The chain runs to 209 residues: Uracil phosphoribosyltransferase (209 aa).

5-phospho-alpha-D-ribose 1-diphosphate contacts are provided by residues arginine 78, arginine 103, and 130–138 (DPMFATGGT). Uracil-binding positions include isoleucine 193 and 198 to 200 (GDA). Residue aspartate 199 coordinates 5-phospho-alpha-D-ribose 1-diphosphate.

Belongs to the UPRTase family. Mg(2+) serves as cofactor.

The catalysed reaction is UMP + diphosphate = 5-phospho-alpha-D-ribose 1-diphosphate + uracil. The protein operates within pyrimidine metabolism; UMP biosynthesis via salvage pathway; UMP from uracil: step 1/1. Allosterically activated by GTP. Functionally, catalyzes the conversion of uracil and 5-phospho-alpha-D-ribose 1-diphosphate (PRPP) to UMP and diphosphate. This Campylobacter fetus subsp. fetus (strain 82-40) protein is Uracil phosphoribosyltransferase.